Here is a 119-residue protein sequence, read N- to C-terminus: MARVSRGVQAHAKHKKILKKAKGYYGARSKVYRIAKQAIIKAGQYAYRDRRQRRRQFRRLWIVRINAEARNNGLSYSRMINGMSKAGIEIDRKVLSDIAIFDKVAFAKIVDQVKQALSV.

It belongs to the bacterial ribosomal protein bL20 family.

Binds directly to 23S ribosomal RNA and is necessary for the in vitro assembly process of the 50S ribosomal subunit. It is not involved in the protein synthesizing functions of that subunit. This Vesicomyosocius okutanii subsp. Calyptogena okutanii (strain HA) protein is Large ribosomal subunit protein bL20.